The primary structure comprises 394 residues: Phosphoglycerate kinase (394 aa).

Residues 21–23 (DLN), 59–62 (HLGR), arginine 117, and arginine 150 contribute to the substrate site. ATP-binding positions include lysine 201, glutamate 318, and 344–347 (GGDT).

The protein belongs to the phosphoglycerate kinase family. As to quaternary structure, monomer.

It is found in the cytoplasm. It catalyses the reaction (2R)-3-phosphoglycerate + ATP = (2R)-3-phospho-glyceroyl phosphate + ADP. It participates in carbohydrate degradation; glycolysis; pyruvate from D-glyceraldehyde 3-phosphate: step 2/5. This is Phosphoglycerate kinase from Blochmanniella pennsylvanica (strain BPEN).